Reading from the N-terminus, the 651-residue chain is MLDRIGPGFQDLCRQVLPTLPSLSQEEVSTIWGNVSDFVERQLTMHKGVQISGLGTFTFTRQQLEMGNKKFVLVQRPVFIMSEKLVQTHGLKQNKVFSPGDIPVVPLNFVMISLEGPFNRDTIEGCVRETLLFLSRSISIKQNVEFTFKGIGVLSIRDNKVKMRFYKDFLSSVDGSGTLTKALANRPGTMDSVLSSRESFGKRPNSALAFPRIEHKETENKPPVEVFGEEGGENRPRKSKLKDQSDKEEGAWEISSAKKHRDRQSISPAKVTSGSLLDKFERSGNGGKITENLSPGGQRNDNEKPKTSPAPACQDHNKAGQEMCYVCLQRAQRNFALYYGDEKRRREIEDERLMQQYQIAKDQEAFFKSQMKSMATREQNQKNAAYNLGVAEAIRSHKNEKPDFYKSFLFDKRPLSPEINAFKQEEYSQSLLKQMESKREKEIKQRQNRELMDRLEQVQLTEELAAQRAQYLKEKMEETQYYKRALDAQVKNKPSQLPMFEPDSAEPIFGKNEGEMEMEKRKREQSCMKHQMEAAANLKRNTILNQLVDQRRDLQMLQRTKREHLADRAAEVDRVNRLNQCLQEDWDRSLAMKKQRDLEEKAFERASDKLFLLDQCEKYRRCRQCQRRTSNTGESNVWPLNKFLQGSRLLV.

Residues 194-314 (LSSRESFGKR…PKTSPAPACQ (121 aa)) are disordered. Ser-206 bears the Phosphoserine mark. Composition is skewed to basic and acidic residues over residues 212–222 (RIEHKETENKP) and 232–250 (GENR…KEEG). The segment covering 265–275 (SISPAKVTSGS) has biased composition (polar residues). Ser-273, Ser-275, Ser-294, and Ser-416 each carry phosphoserine. 2 coiled-coil regions span residues 428-465 (SQSL…EELA) and 539-566 (KRNT…EHLA).

It is found in the cytoplasm. Its subcellular location is the cytoskeleton. The protein localises to the microtubule organizing center. The protein resides in the centrosome. This is Coiled-coil domain-containing protein 81 (Ccdc81) from Rattus norvegicus (Rat).